Consider the following 674-residue polypeptide: Sodium/myo-inositol cotransporter 2 (674 aa).

The Extracellular portion of the chain corresponds to 1–25; the sequence is MESSASSPPLTQSDPLEAFPRRTLE. The helical transmembrane segment at 26–46 threads the bilayer; it reads AGDIAVLVLYFLFVLAVGLWS. Topologically, residues 47–56 are cytoplasmic; that stretch reads TVKTKRDTVK. Residues 57–77 form a helical membrane-spanning segment; it reads GYFLAGGNMLWWPVGASLFAS. The Extracellular segment spans residues 78–102; sequence NVGSGHFVGLAGSGAAAGLSVTAYE. A helical transmembrane segment spans residues 103 to 123; it reads LNGLFFVLMLSWIFLPIYITG. Residues 124 to 140 are Cytoplasmic-facing; the sequence is QVTTMPEYLRKRFGGNR. Residues 141 to 161 traverse the membrane as a helical segment; the sequence is IPIILAVLYLFIYIFTKISVD. At 162–180 the chain is on the extracellular side; sequence MYAGAIFIQQSLHVNLYLA. Residues 181 to 201 traverse the membrane as a helical segment; the sequence is IVGLLAVTALYTIAGGLAAVI. The Cytoplasmic segment spans residues 202-208; the sequence is YTDALQT. A helical membrane pass occupies residues 209 to 229; it reads LIMLIGALILMGYSFAAVGGL. Over 230 to 272 the chain is Extracellular; sequence EGLEEKYFLAMASNRSGNSSCGLPREDAFHIFRDPVTSDLPWP. A helical transmembrane segment spans residues 273–293; sequence GILFGMSIPSLWYWCTDQVIV. Over 294-308 the chain is Cytoplasmic; sequence QRTLAAKNLSHAKGG. The helical transmembrane segment at 309 to 329 threads the bilayer; it reads SLMAAYLKVLPLFIMVFPGMV. Residues 330–374 lie on the Extracellular side of the membrane; it reads SRVLFPDEVACADPEICRKVCSNPAGCSDIAYPKLVLELLPTGLR. The helical transmembrane segment at 375–397 threads the bilayer; the sequence is GLMMAVMVAALTSSLTSIFNSAS. Over 398–418 the chain is Cytoplasmic; that stretch reads TIFTMDLWNHLRPRASEKELM. The chain crosses the membrane as a helical span at residues 419 to 439; sequence IVGRVFVLLLVLVSILWIPVV. Residues 440-446 are Extracellular-facing; sequence QASQGGQ. Residues 447–467 form a helical membrane-spanning segment; sequence LFIYIQSISSYLQPPVAVVFI. Over 468–479 the chain is Cytoplasmic; the sequence is MGCFWKRANEKG. A helical transmembrane segment spans residues 480–500; the sequence is AFFGLVLGLLLGLVRLILDFI. Residues 501-521 lie on the Extracellular side of the membrane; that stretch reads YVQPRCDQLDERPAVVKDVHY. The helical transmembrane segment at 522–542 threads the bilayer; that stretch reads LYFSMILSSVTLITVCAVSWF. Over 543–653 the chain is Cytoplasmic; sequence TEPPSKEMVS…SLEENPLVKT (111 aa). The tract at residues 567 to 589 is disordered; it reads EQVPSATPPPLTLSQNGTPEASG. Residues 578–589 are compositionally biased toward polar residues; it reads TLSQNGTPEASG. A helical membrane pass occupies residues 654–674; the sequence is LLDLNLIICISCAIFLWGYFA.

Belongs to the sodium:solute symporter (SSF) (TC 2.A.21) family.

It is found in the membrane. Its subcellular location is the apical cell membrane. It catalyses the reaction myo-inositol(out) + 2 Na(+)(out) = myo-inositol(in) + 2 Na(+)(in). It carries out the reaction 1D-chiro-inositol(out) + 2 Na(+)(out) = 1D-chiro-inositol(in) + 2 Na(+)(in). The catalysed reaction is D-glucose(out) + 2 Na(+)(out) = D-glucose(in) + 2 Na(+)(in). The enzyme catalyses D-xylose(out) + 2 Na(+)(out) = D-xylose(in) + 2 Na(+)(in). Its activity is regulated as follows. MI transport activity inhibited by D-chiro-inositol (DCI), phlorizin (Pz) and sodium (Na(+)). Insulin increases D-chiro-inositol uptake. Involved in the sodium-dependent cotransport of myo-inositol (MI) with a Na(+):MI stoichiometry of 2:1. Exclusively responsible for apical MI transport and absorption in intestine. Can also transport D-chiro-inositol (DCI) but not L-fucose. Exhibits stereospecific cotransport of both D-glucose and D-xylose. May induce apoptosis through the TNF-alpha, PDCD1 pathway. May play a role in the regulation of MI concentration in serum, involving reabsorption in at least the proximal tubule of the kidney. The protein is Sodium/myo-inositol cotransporter 2 of Bos taurus (Bovine).